A 229-amino-acid polypeptide reads, in one-letter code: MADDFGFFSSSESGAPEAAEEDPAAAFLAQQESEIAGIENDEGFGAPAGSHAAPAQPGPTSGAGSEDMGTTVNGDVFQEANGPADGYAAIAQADRLTQEPESIRKWREEQRKRLQELDAASKVTEQEWREKAKKDLEEWNQRQSEQVEKNKINNRIADKAFYQQPDADIIGYVASEEAFVKESKEETPGTEWEKVAQLCDFNPKSSKQCKDVSRLRSVLMSLKQTPLSR.

Low complexity predominate over residues 1–17 (MADDFGFFSSSESGAPE). Positions 1-82 (MADDFGFFSS…NGDVFQEANG (82 aa)) are disordered. Phosphoserine is present on residues Ser11 and Ser13. Positions 58–73 (GPTSGAGSEDMGTTVN) are enriched in polar residues. Residues 93 to 155 (ADRLTQEPES…QVEKNKINNR (63 aa)) are involved in binding clathrin heavy chain. Thr187 bears the Phosphothreonine mark. Cys199 and Cys209 are disulfide-bonded. Residue Lys204 is modified to N6-acetyllysine. Ser217 is subject to Phosphoserine.

This sequence belongs to the clathrin light chain family. Clathrin coats are formed from molecules containing 3 heavy chains and 3 light chains. Interacts (via N-terminus) with HIP1. Interacts with HIP1R.

It localises to the cytoplasmic vesicle membrane. The protein resides in the membrane. It is found in the coated pit. In terms of biological role, clathrin is the major protein of the polyhedral coat of coated pits and vesicles. The protein is Clathrin light chain B (CLTB) of Homo sapiens (Human).